The chain runs to 276 residues: uncharacterized protein (276 aa).

This is an uncharacterized protein from Methanocaldococcus jannaschii (strain ATCC 43067 / DSM 2661 / JAL-1 / JCM 10045 / NBRC 100440) (Methanococcus jannaschii).